A 308-amino-acid chain; its full sequence is Methionyl-tRNA formyltransferase (308 aa).

109-112 (SLLP) contributes to the (6S)-5,6,7,8-tetrahydrofolate binding site.

Belongs to the Fmt family.

It carries out the reaction L-methionyl-tRNA(fMet) + (6R)-10-formyltetrahydrofolate = N-formyl-L-methionyl-tRNA(fMet) + (6S)-5,6,7,8-tetrahydrofolate + H(+). Its function is as follows. Attaches a formyl group to the free amino group of methionyl-tRNA(fMet). The formyl group appears to play a dual role in the initiator identity of N-formylmethionyl-tRNA by promoting its recognition by IF2 and preventing the misappropriation of this tRNA by the elongation apparatus. The sequence is that of Methionyl-tRNA formyltransferase from Salinispora arenicola (strain CNS-205).